We begin with the raw amino-acid sequence, 621 residues long: MAU2 chromatid cohesion factor homolog (621 aa).

TPR repeat units lie at residues 96–129 (FDTASLLAQLHLQTEQSSHAKAMLRRAVELSQNN), 451–484 (GGFYYVQGLHAFHKNSFHEAKRFLRETLKMANAE), and 491–524 (SCSLVLLSHVFLSIGNSKESMNMVTPAMQLASKI).

This sequence belongs to the SCC4/mau-2 family. Interacts with Nipped-B to form the cohesin loading complex.

It is found in the nucleus. Its subcellular location is the nucleoplasm. Functionally, required for association of the cohesin complex with chromatin during interphase. Plays a role in sister chromatid cohesion and normal progression through prometaphase. The polypeptide is MAU2 chromatid cohesion factor homolog (Drosophila virilis (Fruit fly)).